The primary structure comprises 1295 residues: Protein glp-1 (1295 aa).

A signal peptide spans 1–15 (MRVLLILLAFFAPIA). Over 16 to 764 (SQLMGGECGR…NEIDEGWSRS (749 aa)) the chain is Extracellular. 4 EGF-like domains span residues 19-58 (MGGECGREGACSVNGKCYNGKLIETYWCRCKKGFGGAFCE), 117-152 (GVNPCDSDPCNNGLCYPFYGGFQCICNNGYGGSYCE), 154-190 (GIDHCAQNECAEGSTCVNSVYNYYCDCPIGKSGRYCE), and 190-230 (ERTE…EFCN). Intrachain disulfides connect Cys-23–Cys-35, Cys-29–Cys-46, Cys-48–Cys-57, Cys-121–Cys-131, Cys-126–Cys-140, Cys-142–Cys-151, Cys-158–Cys-169, Cys-163–Cys-178, Cys-180–Cys-189, Cys-201–Cys-206, Cys-220–Cys-229, Cys-236–Cys-248, Cys-242–Cys-257, Cys-259–Cys-268, Cys-275–Cys-286, Cys-280–Cys-296, Cys-298–Cys-307, Cys-329–Cys-342, Cys-336–Cys-347, Cys-349–Cys-358, Cys-373–Cys-384, Cys-378–Cys-394, Cys-396–Cys-405, Cys-411–Cys-422, Cys-416–Cys-431, Cys-433–Cys-442, Cys-450–Cys-461, Cys-455–Cys-467, Cys-469–Cys-478, Cys-496–Cys-519, Cys-501–Cys-514, Cys-510–Cys-526, Cys-536–Cys-560, Cys-542–Cys-555, Cys-551–Cys-567, Cys-582–Cys-595, and Cys-591–Cys-607. The EGF-like 5; calcium-binding domain maps to 232 to 269 (DKNECLIEETCVNNSTCFNLHGDFTCTCKPGYAGKYCE). N-linked (GlcNAc...) asparagine glycans are attached at residues Asn-244 and Asn-245. 5 consecutive EGF-like domains span residues 271–308 (AIDMCKDYVCQNDGYCAHDSNQMPICYCEQGFTGQRCE), 316–359 (GGIH…DRCE), 369–406 (DIQSCKYNPCVNNATCIDLKNSGYSCHCPLGFYGLNCE), 407–443 (QHLLCTPTTCANGGTCEGVNGVIRCNCPNGFSGDYCE), and 446–479 (DRQLCSRHPCKNGGVCKNTGYCECQYGYTGPTCE). N-linked (GlcNAc...) asparagine glycosylation is present at Asn-333. Asn-381 carries N-linked (GlcNAc...) asparagine glycosylation. LNR repeat units follow at residues 496 to 532 (CEQRKCMDLASNGICNPECNLEECNFDGGDCSGGQRP), 536 to 577 (CQYP…CPAH), and 581 to 612 (HCIERRGDGVCNLECSFIGCGFDGGDCNNGTE). Residues Asn-609 and Asn-675 are each glycosylated (N-linked (GlcNAc...) asparagine). The chain crosses the membrane as a helical span at residues 765–786 (QVILFACIAFLAFGTVVAGVIA). Over 787–1295 (KNGPERSRKR…AEQMNGSFYC (509 aa)) the chain is Cytoplasmic. 5 ANK repeats span residues 961–990 (DENTALMLAVRAHRVRLSVVLLREGANPTI), 994–1023 (SERSALHEAVVNKDLRILRHLLTDKRLLKE), 1030–1062 (NGMTALMLVARELGKHQVEMAELLLSKGAKLDY), 1074–1103 (KGRTALHYAAMHDNEEMVIMLVRRSSNKDK), and 1107–1136 (DGRTPIMLAAKEGCEKTVQYLALNDASLGI). Residues 1177 to 1244 (IVKSGHGAKS…TTSTPNRMET (68 aa)) form a disordered region. A compositionally biased stretch (polar residues) spans 1201-1210 (KTPTSAASSR). A compositionally biased stretch (low complexity) spans 1221–1239 (DGSFSSPSPHYYPTTTSTP).

Interacts with sel-10. In terms of assembly, when activated, the glp-1/Notch intracellular domain (NICD) may become a component of a complex consisting of at least the NICD, lag-1 and lag-3. Upon binding its ligands, it is cleaved (S2 cleavage) in its extracellular domain, close to the transmembrane domain. S2 cleavage is probably mediated by the metalloproteases adm-4 and sup-17. It is then cleaved (S3 cleavage) downstream of its transmembrane domain, releasing it from the cell membrane; S3 cleavage requires a multiprotein gamma-secretase complex, which may include presenilin sel-12. In terms of tissue distribution, expressed in the distal mitotic region of the germ line. May be absent from the gonadal distal tip cell (DTC).

Its subcellular location is the cell membrane. It localises to the cell projection. The protein localises to the axon. It is found in the nucleus. Functionally, essential signaling protein which has a major role in germline and embryonic development; involved in cell fate decisions that require cell-cell interactions. Probable membrane-bound receptor for putative ligands lag-2 and apx-1. Upon ligand activation, and releasing from the cell membrane, the glp-1/Notch intracellular domain (NICD) probably forms a transcriptional activator complex with lag-1 and lag-3 and regulates expression of various genes; targets in the germline include lst-1 and sygl-1. Involved in the specification of the cell fates of the blastomeres, ABa and ABp. Proper signaling by glp-1 induces ABa descendants to produce anterior pharyngeal cells, and ABp descendants to adopt a different fate. Contributes to the establishment of the dorsal-ventral axis in early embryos. Required in postmitotic neurons in order to maintain the developmentally arrested larval state known as dauer, probably in response to lag-2. Regulates germ cell mitotic proliferation probably by regulating MAP kinase phosphatase lip-1 expression. Required for oocyte growth control. Plays a negative role in lifespan. In Caenorhabditis elegans, this protein is Protein glp-1.